Consider the following 554-residue polypeptide: MESKVREIHAPRGKTLNTKGWGQEAALRLLMNNLDPMVAKDPANLIVYGGKGKAARNWEAFDKIVQELKRLENDETLLIQSGKPVGVFKTTKDAPRVLIVNAQIVPHWATDDVFWDLEARGLTMFGQMTAGSWIYIGTQGVLQGTYETLSALARKEFGKDDLSGKWVLTSGLGEMGGAQPLAITMNNASGIVVEVDEEKIKRRLRDKYLDTWTESLDEALKMKDESLAEGKPTSIGLLGNAATVYDELMRRGIVPDVVSDQTAAHDLNLGYIPEGYTVESAAKFRDENREEYIKRVYASIVKEARAILWFQRHGSKTFDYGNNFRTRAQEGGMKDAFEIPGYVPAYIRDLFAVGSGPFRWVALSGDPQDIYRIDDAIIKNFQKDQHLVRWIKLAKERVHFQGLPARICYASYGEREEIGLMINDMVRSGDLQAPVAIGRDHHDTGSVASPYRETEKMKDGSDAIADWPILNALLNAISGATWVSVHHGGGTAIGNAIHAGFVIVADGTKDAEERIKRVLNADPGIGVIRHADAGYESSIDIIKKGPKFRYPYIN.

NAD(+) contacts are provided by residues 49 to 50, Q127, E194, 240 to 241, 261 to 265, 271 to 272, and Y320; these read GG, NA, QTAAH, and YI. C408 is an active-site residue. Residue G490 participates in NAD(+) binding.

The protein belongs to the urocanase family. The cofactor is NAD(+).

The protein localises to the cytoplasm. The catalysed reaction is 4-imidazolone-5-propanoate = trans-urocanate + H2O. It functions in the pathway amino-acid degradation; L-histidine degradation into L-glutamate; N-formimidoyl-L-glutamate from L-histidine: step 2/3. In terms of biological role, catalyzes the conversion of urocanate to 4-imidazolone-5-propionate. In Thermoplasma acidophilum (strain ATCC 25905 / DSM 1728 / JCM 9062 / NBRC 15155 / AMRC-C165), this protein is Probable urocanate hydratase.